The following is an 821-amino-acid chain: Ribonuclease R (821 aa).

The RNB domain occupies R267–I593. An S1 motif domain is found at G652–V733. The tract at residues L739 to K821 is disordered. 2 stretches are compositionally biased toward basic and acidic residues: residues K748–A764 and T774–S794. The segment covering K795–G814 has biased composition (basic residues).

It belongs to the RNR ribonuclease family. RNase R subfamily.

It localises to the cytoplasm. The catalysed reaction is Exonucleolytic cleavage in the 3'- to 5'-direction to yield nucleoside 5'-phosphates.. 3'-5' exoribonuclease that releases 5'-nucleoside monophosphates and is involved in maturation of structured RNAs. This chain is Ribonuclease R, found in Vibrio cholerae serotype O1 (strain ATCC 39315 / El Tor Inaba N16961).